The following is a 203-amino-acid chain: Transcriptional regulator GfcR (203 aa).

It belongs to the purine/pyrimidine phosphoribosyltransferase family. GfcR subfamily.

The sequence is that of Transcriptional regulator GfcR from Methanothrix thermoacetophila (strain DSM 6194 / JCM 14653 / NBRC 101360 / PT) (Methanosaeta thermophila).